Reading from the N-terminus, the 190-residue chain is Lipocalin Can f 6.0101 (190 aa).

The N-terminal stretch at 1–15 is a signal peptide; that stretch reads MKLLLLCLGLILVHA. The igE-binding stretch occupies residues 43 to 54; it reads SDIKEKIEENGS. Residues Asn52 and Asn67 are each glycosylated (N-linked (GlcNAc...) asparagine). The interval 76–83 is igE-binding; sequence TKVNGKCT. A disulfide bridge links Cys82 with Cys175. N-linked (GlcNAc...) asparagine glycosylation occurs at Asn90. Residues 91–97 form an igE-binding region; the sequence is KTEKDGE. Residues 100–109 form a no IgE-binding region; it reads VVHDGYNLFR. 2 igE-binding regions span residues 125-132 and 139-152; these read NVNQEQEF and GRKP…KEKF.

This sequence belongs to the calycin superfamily. Lipocalin family. Monomer. In terms of tissue distribution, expressed in saliva (at protein level). Expressed in dander (at protein level). According to PubMed:22104604, expressed in submaxillary gland. In contrast, according to PubMed:22515174, not expressed in submaxillary gland. Expressed in bladder and skin, but not in tongue.

Its subcellular location is the secreted. The protein is Lipocalin Can f 6.0101 of Canis lupus familiaris (Dog).